Consider the following 942-residue polypeptide: MORC family CW-type zinc finger protein 3 (942 aa).

Residues K191, K205, K280, and K293 each participate in a glycyl lysine isopeptide (Lys-Gly) (interchain with G-Cter in SUMO2) cross-link. Positions 326-353 are nuclear matrix binding; the sequence is AYEKVGCQLKANNMGVGVVGIIECNFLK. Residues 404-454 form a CW-type zinc finger; the sequence is KRPDQTWVQCDACLKWRKLPDGIDQLPEKWYCSNNPDPQFRNCEVPEEPED. Zn(2+) contacts are provided by C413, C416, C435, and C446. The segment at 503–594 is RNA binding; sequence SFSPVKESVP…ENSTPKPAVD (92 aa). 2 positions are modified to phosphoserine: S517 and S543. K558 participates in a covalent cross-link: Glycyl lysine isopeptide (Lys-Gly) (interchain with G-Cter in SUMO2). Position 563 is a phosphoserine (S563). K604 participates in a covalent cross-link: Glycyl lysine isopeptide (Lys-Gly) (interchain with G-Cter in SUMO1); alternate. K604 is covalently cross-linked (Glycyl lysine isopeptide (Lys-Gly) (interchain with G-Cter in SUMO2); alternate). Residues 623–654 form a disordered region; sequence PKPCVQASSTSTSTSRSDPGITVSTQTDAPGL. The segment covering 630–639 has biased composition (low complexity); the sequence is SSTSTSTSRS. Residues K657, K658, and K743 each participate in a glycyl lysine isopeptide (Lys-Gly) (interchain with G-Cter in SUMO1); alternate cross-link. Glycyl lysine isopeptide (Lys-Gly) (interchain with G-Cter in SUMO2); alternate cross-links involve residues K657, K658, and K743. A coiled-coil region spans residues 696-874; the sequence is SHQLQELRSE…KSTGQQAAAD (179 aa). S768 bears the Phosphoserine mark. K797 participates in a covalent cross-link: Glycyl lysine isopeptide (Lys-Gly) (interchain with G-Cter in SUMO1); alternate. K797 is covalently cross-linked (Glycyl lysine isopeptide (Lys-Gly) (interchain with G-Cter in SUMO2); alternate).

Homodimer. The sumoylated form interacts with PML (via SUMO-interacting motif). Interacts with TP53. In terms of processing, sumoylation is involved in interaction with PML and localization to PML nuclear bodies.

It localises to the nucleus. The protein resides in the nucleoplasm. The protein localises to the nucleus matrix. It is found in the PML body. Its subcellular location is the chromosome. Its activity is regulated as follows. Dimerization of the ATPase domain is strictly required for the catalytic activity and binding to double-stranded DNA. Disrupting the interface between ATPase and the CW domains releases autoinhibition since the CW domain sterically impedes binding of the ATPase domain to DNA. Nuclear matrix protein which forms MORC3-NBs (nuclear bodies) via an ATP-dependent mechanism and plays a role in innate immunity by restricting different viruses through modulation of the IFN response. Mechanistically, possesses a primary antiviral function through a MORC3-regulated element that activates IFNB1, and this function is guarded by a secondary IFN-repressing function. Sumoylated MORC3-NBs associates with PML-NBs and recruits TP53 and SP100, thus regulating TP53 activity. Binds RNA in vitro. Histone methylation reader which binds to non-methylated (H3K4me0), monomethylated (H3K4me1), dimethylated (H3K4me2) and trimethylated (H3K4me3) 'Lys-4' on histone H3. The order of binding preference is H3K4me3 &gt; H3K4me2 &gt; H3K4me1 &gt; H3K4me0. The polypeptide is MORC family CW-type zinc finger protein 3 (Mus musculus (Mouse)).